The chain runs to 1085 residues: Solute carrier family 12 member 4 (1085 aa).

Residues 1–119 (MPHFTVVPVD…RRAAKAPSMG (119 aa)) lie on the Cytoplasmic side of the membrane. Residues Ser24, Ser47, Ser51, Ser81, and Ser88 each carry the phosphoserine modification. The interval 32 to 56 (AEREDSDGQGNHRENSPFLSPLDAS) is disordered. Residues 120-141 (TLMGVYLPCLQNIFGVILFLRL) form a discontinuously helical membrane-spanning segment. K(+) is bound by residues Asn131 and Ile132. The Extracellular segment spans residues 142–149 (TWMVGTAG). Residues 150–172 (VLQALLIVLICCCCTLLTAISMS) form a helical membrane-spanning segment. Residues 173–196 (AIATNGVVPAGGSYFMISRSLGPE) are Cytoplasmic-facing. The chain crosses the membrane as a helical span at residues 197-225 (FGGAVGLCFYLGTTFAAAMYILGAIEILL). Tyr216 contacts K(+). Topologically, residues 226 to 248 (TYIAPPAAIFYPSGTHDMSSATL) are extracellular. Helical transmembrane passes span 249-271 (NNMR…VGVK) and 272-297 (YVNK…GGIK). Residues 298 to 419 (SAFDPPVFPV…LYVVADIATS (122 aa)) are Extracellular-facing. Cys308 and Cys323 form a disulfide bridge. 3 N-linked (GlcNAc...) asparagine glycosylation sites follow: Asn312, Asn331, and Asn347. The cysteines at positions 343 and 353 are disulfide-linked. A helical membrane pass occupies residues 420-440 (FTVLVGIFFPSVTGIMAGSNR). Residues Pro429 and Thr432 each contribute to the K(+) site. Residues Gly433, Ile434, and Met435 each contribute to the chloride site. At 441 to 450 (SGDLRDAQKS) the chain is on the cytoplasmic side. The helical transmembrane segment at 451 to 473 (IPVGTILAIVTTSLVYFSSVILF) threads the bilayer. Residues 474–504 (GACIEGVVLRDKYGDGVSRNLVVGTLAWPSP) are Extracellular-facing. The chain crosses the membrane as a helical span at residues 505-531 (WVIVVGSFFSTCGAGLQSLTGAPRLLQ). The Cytoplasmic portion of the chain corresponds to 532–554 (AIAKDNIIPFLRVFGHGKANGEP). 2 helical membrane passes run 555-575 (TWAL…ASLD) and 576-598 (MVAP…ACAV). Tyr589 provides a ligand contact to chloride. Over 599 to 612 (QTLLRTPNWRPRFK) the chain is Cytoplasmic. Transmembrane regions (helical) follow at residues 613–635 (YYHW…VSSW) and 636–651 (YYAL…IYKY). The Cytoplasmic portion of the chain corresponds to 652 to 1085 (IEYQGAEKEW…GGREVITIYS (434 aa)). The scissor helix stretch occupies residues 665–681 (IRGLSLSAARYALLRLE). Residues Leu697, Lys699, Lys707, Tyr708, and Val730 each coordinate ATP. Residue Ser734 is modified to Phosphoserine. 3 residues coordinate ATP: Gly794, Trp795, and Tyr797. Phosphoserine is present on residues Ser916 and Ser967. Thr983 is modified (phosphothreonine). Ser1050 is subject to Phosphoserine.

It belongs to the SLC12A transporter family. K/Cl co-transporter subfamily. In terms of assembly, homodimer; adopts a domain-swap conformation at the scissor helices connecting the transmembrane domain and C-terminal domain. Heterodimer with other K-Cl cotransporters. In terms of processing, N-glycosylated. Phosphorylated, phosphorylation may regulate transporter activity. In terms of tissue distribution, ubiquitous.

Its subcellular location is the cell membrane. It carries out the reaction K(+)(in) + chloride(in) = K(+)(out) + chloride(out). Its activity is regulated as follows. Inhibited by WNK3. Functionally, mediates electroneutral potassium-chloride cotransport when activated by cell swelling. May contribute to cell volume homeostasis in single cells. May be involved in the regulation of basolateral Cl(-) exit in NaCl absorbing epithelia. This is Solute carrier family 12 member 4 (Slc12a4) from Rattus norvegicus (Rat).